A 282-amino-acid polypeptide reads, in one-letter code: 5'-adenylylsulfate reductase-like 2 (282 aa).

Positions 1–19 are cleaved as a signal peptide; that stretch reads MRWWPALPLLLLAVAVAGA. The Thioredoxin domain maps to 20-159; the sequence is GDAAPVCTRP…LAAFYNDVSG (140 aa). The N-linked (GlcNAc...) asparagine glycan is linked to asparagine 134. The chain crosses the membrane as a helical span at residues 205–225; it reads AASFVILRLLYLFYPKITAFV.

It localises to the membrane. The sequence is that of 5'-adenylylsulfate reductase-like 2 (APRL2) from Oryza sativa subsp. japonica (Rice).